The sequence spans 216 residues: Superoxide dismutase [Cu-Zn], chloroplastic (216 aa).

The N-terminal 62 residues, 1–62, are a transit peptide targeting the chloroplast; it reads MACHSALAAV…ASPRSMVVVA (62 aa). Residues His-108, His-110, and His-125 each coordinate Cu cation. A disulfide bridge connects residues Cys-119 and Cys-208. Zn(2+)-binding residues include His-125, His-133, His-142, and Asp-145. Residue His-182 coordinates Cu cation.

The protein belongs to the Cu-Zn superoxide dismutase family. As to quaternary structure, homotetramer. Cu cation is required as a cofactor. Zn(2+) serves as cofactor.

The protein localises to the plastid. It localises to the chloroplast. The catalysed reaction is 2 superoxide + 2 H(+) = H2O2 + O2. In terms of biological role, destroys radicals which are normally produced within the cells and which are toxic to biological systems. This chain is Superoxide dismutase [Cu-Zn], chloroplastic (SODCP), found in Zantedeschia aethiopica (White calla lily).